A 262-amino-acid polypeptide reads, in one-letter code: Short-chain Z-isoprenyl diphosphate synthase (262 aa).

Asp-40 is an active-site residue. Asp-40 contacts Mg(2+). Substrate is bound by residues Gly-41–Arg-44, Trp-45, and Ser-86–Glu-88. The active-site Proton acceptor is Asn-89. Residues Arg-92, Arg-211, and Arg-217–Ser-219 contribute to the substrate site. Residue Glu-230 coordinates Mg(2+).

This sequence belongs to the UPP synthase family. Z-FPP synthase subfamily. It depends on Mg(2+) as a cofactor.

The enzyme catalyses isopentenyl diphosphate + (2E)-geranyl diphosphate = (2Z,6E)-farnesyl diphosphate + diphosphate. The protein operates within phospholipid metabolism; decaprenyl phosphate biosynthesis. In terms of biological role, generates Z-farnesyl diphosphate (Z-FPP) from isopentenyl pyrophosphate (IPP). Z-FPP is the precursor of decaprenyl diphosphate, which has a central role in the biosynthesis of the mycobacterial cell wall. The sequence is that of Short-chain Z-isoprenyl diphosphate synthase from Mycobacterium bovis (strain ATCC BAA-935 / AF2122/97).